The primary structure comprises 86 residues: Large ribosomal subunit protein uL23 (86 aa).

The protein belongs to the universal ribosomal protein uL23 family. In terms of assembly, part of the 50S ribosomal subunit. Contacts protein L29.

Binds to 23S rRNA. One of the proteins that surrounds the polypeptide exit tunnel on the outside of the ribosome. This is Large ribosomal subunit protein uL23 from Methanococcus vannielii (strain ATCC 35089 / DSM 1224 / JCM 13029 / OCM 148 / SB).